The primary structure comprises 202 residues: Succinate dehydrogenase cytochrome b558 subunit (202 aa).

A run of 5 helical transmembrane segments spans residues 12–31 (LHSL…HLVV), 60–79 (IFII…YIAF), 93–113 (NWLF…VSWH), 135–155 (ILSS…TIFH), and 178–196 (ISTY…VGLK). Heme is bound by residues histidine 28, histidine 70, histidine 113, and histidine 155.

This sequence belongs to the cytochrome b558 family. Part of an enzyme complex containing three subunits: a flavoprotein, an iron-sulfur protein and cytochrome b-558.

It localises to the cell membrane. The protein operates within carbohydrate metabolism; tricarboxylic acid cycle. Di-heme cytochrome of the succinate dehydrogenase complex. The sequence is that of Succinate dehydrogenase cytochrome b558 subunit (sdhC) from Bacillus subtilis (strain 168).